The primary structure comprises 483 residues: Cysteine--tRNA ligase (483 aa).

Cys-28 is a binding site for Zn(2+). A 'HIGH' region motif is present at residues 30-40; that stretch reads MTVYDYCHLGH. Positions 212, 237, and 241 each coordinate Zn(2+). A 'KMSKS' region motif is present at residues 269–273; that stretch reads KMSKS. Lys-272 provides a ligand contact to ATP.

It belongs to the class-I aminoacyl-tRNA synthetase family. As to quaternary structure, monomer. Zn(2+) is required as a cofactor.

Its subcellular location is the cytoplasm. It carries out the reaction tRNA(Cys) + L-cysteine + ATP = L-cysteinyl-tRNA(Cys) + AMP + diphosphate. The polypeptide is Cysteine--tRNA ligase (Bordetella avium (strain 197N)).